Consider the following 367-residue polypeptide: UDP-N-acetylglucosamine--N-acetylmuramyl-(pentapeptide) pyrophosphoryl-undecaprenol N-acetylglucosamine transferase (367 aa).

UDP-N-acetyl-alpha-D-glucosamine-binding positions include 13-15 (TGG), Arg168, Ser196, Ile252, and Gln297.

It belongs to the glycosyltransferase 28 family. MurG subfamily.

The protein resides in the cell inner membrane. The enzyme catalyses di-trans,octa-cis-undecaprenyl diphospho-N-acetyl-alpha-D-muramoyl-L-alanyl-D-glutamyl-meso-2,6-diaminopimeloyl-D-alanyl-D-alanine + UDP-N-acetyl-alpha-D-glucosamine = di-trans,octa-cis-undecaprenyl diphospho-[N-acetyl-alpha-D-glucosaminyl-(1-&gt;4)]-N-acetyl-alpha-D-muramoyl-L-alanyl-D-glutamyl-meso-2,6-diaminopimeloyl-D-alanyl-D-alanine + UDP + H(+). Its pathway is cell wall biogenesis; peptidoglycan biosynthesis. In terms of biological role, cell wall formation. Catalyzes the transfer of a GlcNAc subunit on undecaprenyl-pyrophosphoryl-MurNAc-pentapeptide (lipid intermediate I) to form undecaprenyl-pyrophosphoryl-MurNAc-(pentapeptide)GlcNAc (lipid intermediate II). In Methylibium petroleiphilum (strain ATCC BAA-1232 / LMG 22953 / PM1), this protein is UDP-N-acetylglucosamine--N-acetylmuramyl-(pentapeptide) pyrophosphoryl-undecaprenol N-acetylglucosamine transferase.